The following is a 238-amino-acid chain: tRNA (guanine-N(1)-)-methyltransferase (238 aa).

S-adenosyl-L-methionine-binding positions include glycine 109 and isoleucine 129 to leucine 134.

The protein belongs to the RNA methyltransferase TrmD family. As to quaternary structure, homodimer.

It localises to the cytoplasm. The enzyme catalyses guanosine(37) in tRNA + S-adenosyl-L-methionine = N(1)-methylguanosine(37) in tRNA + S-adenosyl-L-homocysteine + H(+). Functionally, specifically methylates guanosine-37 in various tRNAs. The sequence is that of tRNA (guanine-N(1)-)-methyltransferase from Exiguobacterium sp. (strain ATCC BAA-1283 / AT1b).